Reading from the N-terminus, the 620-residue chain is GTP-binding protein At3g49725, chloroplastic (620 aa).

Residues 1 to 65 constitute a chloroplast transit peptide; it reads MSVTTSFGIW…SSFLARDRLR (65 aa). Residues 57–100 are disordered; it reads SFLARDRLRSKTPSSSPFSSKRHTPKTSEIEEESTPKDSVLLNP. In terms of domain architecture, Hflx-type G spans 346–585; that stretch reads GTIAVVGYTN…LIDDKMKEKK (240 aa). GTP is bound by residues 352–359, 377–381, 399–402, and 468–471; these read GYTNAGKS, FATLD, DTVG, and NKID. Mg(2+) contacts are provided by Ser359 and Thr379. Acidic residues-rich tracts occupy residues 478-497 and 511-521; these read EEEK…EDEA and TVDEDQIQNGD. The tract at residues 478 to 521 is disordered; the sequence is EEEKYLDDGEGVGEEDEDEADLKAEETVDASEATVDEDQIQNGD. A GTP-binding site is contributed by 563-565; it reads SAL. The segment at 597-620 is disordered; it reads LHKRKWRPPRNDDEEERLIPLDQR.

This sequence belongs to the TRAFAC class OBG-HflX-like GTPase superfamily. HflX GTPase family. Requires Mg(2+) as cofactor.

The protein localises to the plastid. The protein resides in the chloroplast. This is GTP-binding protein At3g49725, chloroplastic from Arabidopsis thaliana (Mouse-ear cress).